The following is a 226-amino-acid chain: MKFFRSVGEVFGYSPFRSLAQHARMCGRAVGLLQQQFEALRRGNYEEVEELREEIDELEHHADQIKEEIRGNVTKSLMLPVDRHDLLEFLKVQDDILNNCEHVGHMVTFRKVSAPEDVWDEFLVLLSKLMEIVNNYEEMVERIMQLVETSFSKKEVNRALEYVPIIEQLEHECDLIQIGLHTKLFNLENSNPLDIQLMVTWVVHLGYVANAAARASDRFRIMILGR.

The protein belongs to the UPF0111 family.

The sequence is that of UPF0111 protein AF_1799 from Archaeoglobus fulgidus (strain ATCC 49558 / DSM 4304 / JCM 9628 / NBRC 100126 / VC-16).